The sequence spans 761 residues: Subtilisin-like protease SBT3.15 (761 aa).

A signal peptide spans 1 to 21 (MENSFLSSKLVFLLAIALVLF). The propeptide at 22 to 120 (LNTELSFLTA…VIPNRILKLK (99 aa)) is activation peptide. The Inhibitor I9 domain maps to 41-119 (VYIVYLGQRE…HVIPNRILKL (79 aa)). The Peptidase S8 domain occupies 134-613 (PTSFSSSSSA…GGLVNPEKAA (480 aa)). N-linked (GlcNAc...) asparagine glycosylation is present at Asn151. The Charge relay system role is filled by Asp164. An N-linked (GlcNAc...) asparagine glycan is attached at Asn197. Catalysis depends on His241, which acts as the Charge relay system. Asn256 and Asn384 each carry an N-linked (GlcNAc...) asparagine glycan. The active-site Charge relay system is Ser544. An N-linked (GlcNAc...) asparagine glycan is attached at Asn636.

Belongs to the peptidase S8 family.

It localises to the secreted. The polypeptide is Subtilisin-like protease SBT3.15 (Arabidopsis thaliana (Mouse-ear cress)).